Reading from the N-terminus, the 406-residue chain is RILP-like protein 1 (406 aa).

S7 is modified (phosphoserine). The region spanning 10-97 is the RH1 domain; that stretch reads AALSALEKNV…RVERMDRIEK (88 aa). C47 carries the S-nitrosocysteine modification. A coiled-coil region spans residues 76–258; the sequence is ELDELRLELD…KLRERLQGEH (183 aa). Disordered regions lie at residues 255 to 280 and 330 to 354; these read QGEH…ESIS and EIEE…QPES. S259 carries the phosphoserine modification. A compositionally biased stretch (acidic residues) spans 262–280; it reads GEEEEAEIPPQPDGEESIS. The RH2 domain maps to 294-359; it reads RPRFTLQELR…PQPESGIKRL (66 aa).

It belongs to the RILPL family. As to quaternary structure, interacts (when S-nitrosylated) with GAPDH. Interacts with RAB8A; interaction is dependent on the phosphorylation of 'Thr-72' of RAB8A. Interacts with RAB10 and RAB12; the interaction is dependent on the phosphorylation of 'Thr-73' of RAB10, and 'Ser-105' of RAB12. S-nitrosylation is required for the interaction with GAPDH. Highly expressed in heart, skeletal muscle, brain and lung (at protein level).

It is found in the cytoplasm. The protein resides in the cytosol. The protein localises to the cytoskeleton. Its subcellular location is the microtubule organizing center. It localises to the centrosome. It is found in the centriole. The protein resides in the cilium basal body. In terms of biological role, plays a role in the regulation of cell shape and polarity. Plays a role in cellular protein transport, including protein transport away from primary cilia. Neuroprotective protein, which acts by sequestring GAPDH in the cytosol and prevent the apoptotic function of GAPDH in the nucleus. Competes with SIAH1 for binding GAPDH. Does not regulate lysosomal morphology and distribution. Binds to RAB10 following LRRK2-mediated RAB10 phosphorylation which leads to inhibition of ciliogenesis. This is RILP-like protein 1 (Rilpl1) from Rattus norvegicus (Rat).